A 465-amino-acid polypeptide reads, in one-letter code: Glutamate--tRNA ligase (465 aa).

The 'HIGH' region motif lies at 11 to 21; the sequence is PSPTGYLHIGG. Positions 243–247 match the 'KMSKS' region motif; that stretch reads KLSKR. Lys-246 is a binding site for ATP.

Belongs to the class-I aminoacyl-tRNA synthetase family. Glutamate--tRNA ligase type 1 subfamily. In terms of assembly, monomer.

It localises to the cytoplasm. It catalyses the reaction tRNA(Glu) + L-glutamate + ATP = L-glutamyl-tRNA(Glu) + AMP + diphosphate. Functionally, catalyzes the attachment of glutamate to tRNA(Glu) in a two-step reaction: glutamate is first activated by ATP to form Glu-AMP and then transferred to the acceptor end of tRNA(Glu). The polypeptide is Glutamate--tRNA ligase (Aromatoleum aromaticum (strain DSM 19018 / LMG 30748 / EbN1) (Azoarcus sp. (strain EbN1))).